The sequence spans 53 residues: Large ribosomal subunit protein bL33 (53 aa).

This sequence belongs to the bacterial ribosomal protein bL33 family.

The protein is Large ribosomal subunit protein bL33 of Ureaplasma parvum serovar 3 (strain ATCC 27815 / 27 / NCTC 11736).